The sequence spans 455 residues: Protein indeterminate-domain 7 (455 aa).

The interval 1–52 (MMMNRDILFHQQQQQQMEENMSNLTSASGDQASVSSGNRTETSGSNINQHHQ) is disordered. The span at 17-49 (MEENMSNLTSASGDQASVSSGNRTETSGSNINQ) shows a compositional bias: polar residues. The residue at position 82 (Ser82) is a Phosphoserine. C2H2-type zinc fingers lie at residues 92 to 114 (FICE…KRGH) and 134 to 164 (YVCP…FRKH). The Nuclear localization signal motif lies at 156–163 (IKKHFFRK). The C2H2-type 2; degenerate zinc-finger motif lies at 169 to 192 (WKCEKCSKKYAVQSDWKAHAKTCG). Zn(2+) contacts are provided by Cys171, Cys174, His187, Cys191, Cys198, Cys200, His213, and Cys217. The CCHC-type 2; atypical zinc-finger motif lies at 196–219 (YKCDCGTLFSRRDSFITHRAFCDA). The interval 206–218 (RRDSFITHRAFCD) is SHR-binding. Residues 235 to 351 (QASNSPHHHH…PEEEERSSRS (117 aa)) form a disordered region. Composition is skewed to low complexity over residues 248–265 (QQNI…SNSN) and 288–299 (SSNPNPNGNNGN).

Its subcellular location is the nucleus. Its function is as follows. Probable transcription factor. In Arabidopsis thaliana (Mouse-ear cress), this protein is Protein indeterminate-domain 7.